The primary structure comprises 585 residues: Aspartate--tRNA ligase (585 aa).

E173 serves as a coordination point for L-aspartate. Positions 197–200 (QTLK) are aspartate. R219 contributes to the L-aspartate binding site. Residues 219-221 (RDE) and Q228 each bind ATP. Position 446 (H446) interacts with L-aspartate. E480 contributes to the ATP binding site. R487 is a binding site for L-aspartate. 532 to 535 (GLDR) contributes to the ATP binding site.

This sequence belongs to the class-II aminoacyl-tRNA synthetase family. Type 1 subfamily. Homodimer.

It localises to the cytoplasm. The enzyme catalyses tRNA(Asp) + L-aspartate + ATP = L-aspartyl-tRNA(Asp) + AMP + diphosphate. In terms of biological role, catalyzes the attachment of L-aspartate to tRNA(Asp) in a two-step reaction: L-aspartate is first activated by ATP to form Asp-AMP and then transferred to the acceptor end of tRNA(Asp). The sequence is that of Aspartate--tRNA ligase from Bacteroides fragilis (strain ATCC 25285 / DSM 2151 / CCUG 4856 / JCM 11019 / LMG 10263 / NCTC 9343 / Onslow / VPI 2553 / EN-2).